The primary structure comprises 275 residues: Formamidopyrimidine-DNA glycosylase (275 aa).

The active-site Schiff-base intermediate with DNA is the Pro2. Residue Glu3 is the Proton donor of the active site. Lys59 serves as the catalytic Proton donor; for beta-elimination activity. The DNA site is built by His92, Arg111, and Lys155. Residues 240 to 274 (YVYGQTGEPCRRCGHEIEKMKLGGRGTHYCPHCQQ) form an FPG-type zinc finger. The Proton donor; for delta-elimination activity role is filled by Arg264.

Belongs to the FPG family. In terms of assembly, monomer. Requires Zn(2+) as cofactor.

The catalysed reaction is Hydrolysis of DNA containing ring-opened 7-methylguanine residues, releasing 2,6-diamino-4-hydroxy-5-(N-methyl)formamidopyrimidine.. It carries out the reaction 2'-deoxyribonucleotide-(2'-deoxyribose 5'-phosphate)-2'-deoxyribonucleotide-DNA = a 3'-end 2'-deoxyribonucleotide-(2,3-dehydro-2,3-deoxyribose 5'-phosphate)-DNA + a 5'-end 5'-phospho-2'-deoxyribonucleoside-DNA + H(+). In terms of biological role, involved in base excision repair of DNA damaged by oxidation or by mutagenic agents. Acts as a DNA glycosylase that recognizes and removes damaged bases. Has a preference for oxidized purines, such as 7,8-dihydro-8-oxoguanine (8-oxoG). Has AP (apurinic/apyrimidinic) lyase activity and introduces nicks in the DNA strand. Cleaves the DNA backbone by beta-delta elimination to generate a single-strand break at the site of the removed base with both 3'- and 5'-phosphates. The polypeptide is Formamidopyrimidine-DNA glycosylase (Exiguobacterium sp. (strain ATCC BAA-1283 / AT1b)).